The sequence spans 89 residues: Large ribosomal subunit protein bL27 (89 aa).

A disordered region spans residues 1–26; sequence MAQKKAGGSSRNGRDSVGQRRGVKRF.

Belongs to the bacterial ribosomal protein bL27 family.

This is Large ribosomal subunit protein bL27 from Desulfovibrio desulfuricans (strain ATCC 27774 / DSM 6949 / MB).